A 449-amino-acid polypeptide reads, in one-letter code: Glucose-6-phosphate isomerase (449 aa).

Residue glutamate 291 is the Proton donor of the active site. Residues histidine 312 and lysine 426 contribute to the active site.

It belongs to the GPI family.

It localises to the cytoplasm. It carries out the reaction alpha-D-glucose 6-phosphate = beta-D-fructose 6-phosphate. It participates in carbohydrate biosynthesis; gluconeogenesis. It functions in the pathway carbohydrate degradation; glycolysis; D-glyceraldehyde 3-phosphate and glycerone phosphate from D-glucose: step 2/4. In terms of biological role, catalyzes the reversible isomerization of glucose-6-phosphate to fructose-6-phosphate. The chain is Glucose-6-phosphate isomerase from Streptococcus pneumoniae serotype 4 (strain ATCC BAA-334 / TIGR4).